We begin with the raw amino-acid sequence, 357 residues long: 4-hydroxyphenylpyruvate dioxygenase (357 aa).

2 consecutive VOC domains span residues 12-129 (GFEF…LIDR) and 158-313 (IIDH…IFSE). Positions 161, 240, and 322 each coordinate Fe cation.

Belongs to the 4HPPD family. As to quaternary structure, homotetramer. Fe cation serves as cofactor.

The enzyme catalyses 3-(4-hydroxyphenyl)pyruvate + O2 = homogentisate + CO2. It participates in amino-acid degradation; L-phenylalanine degradation; acetoacetate and fumarate from L-phenylalanine: step 3/6. The protein is 4-hydroxyphenylpyruvate dioxygenase (hpd) of Pseudomonas sp. (strain P.J. 874).